A 93-amino-acid chain; its full sequence is Large ribosomal subunit protein uL23cz/uL23cy (93 aa).

Belongs to the universal ribosomal protein uL23 family. Part of the 50S ribosomal subunit.

It localises to the plastid. Its subcellular location is the chloroplast. Binds to 23S rRNA. The polypeptide is Large ribosomal subunit protein uL23cz/uL23cy (rpl23-A) (Jasminum nudiflorum (Winter jasmine)).